A 127-amino-acid chain; its full sequence is Small ribosomal subunit protein uS11 (127 aa).

The protein belongs to the universal ribosomal protein uS11 family. As to quaternary structure, part of the 30S ribosomal subunit. Interacts with proteins S7 and S18. Binds to IF-3.

Its function is as follows. Located on the platform of the 30S subunit, it bridges several disparate RNA helices of the 16S rRNA. Forms part of the Shine-Dalgarno cleft in the 70S ribosome. The sequence is that of Small ribosomal subunit protein uS11 from Chlorobium phaeobacteroides (strain DSM 266 / SMG 266 / 2430).